Here is a 214-residue protein sequence, read N- to C-terminus: Thioredoxin-like 4, chloroplastic (214 aa).

The span at 1 to 20 (MITASLLPLPATSSSSGRRS) shows a compositional bias: low complexity. A disordered region spans residues 1–68 (MITASLLPLP…STNGSLPGLP (68 aa)). Residues 1–71 (MITASLLPLP…GSLPGLPPVV (71 aa)) constitute a chloroplast transit peptide. The span at 21-34 (LPPPTTTFPRPPPP) shows a compositional bias: pro residues. A compositionally biased stretch (low complexity) spans 42–53 (SSSSSSASSTES). The Thioredoxin domain occupies 72-199 (VEEEEEEFCP…IIAAIQKYTA (128 aa)). Active-site nucleophile residues include Cys-117 and Cys-120. A disulfide bridge links Cys-117 with Cys-120.

It belongs to the thioredoxin family.

Its subcellular location is the plastid. It is found in the chloroplast. Functionally, probable thiol-disulfide oxidoreductase that may participate in various redox reactions. This chain is Thioredoxin-like 4, chloroplastic, found in Oryza sativa subsp. japonica (Rice).